A 357-amino-acid chain; its full sequence is MGDHNLPDFQTCLKFSVTAKKSFLCMYRDSVSKEKLASSMPSTCDIQLKRAINDAYPGGGIKVTVLNSTTASLDSLATTHVKEFEIVIIPDINSLLQPDQAKLVKIMRDCTVAIEKAQSTRIFIGVVHWNNPVQPSGAAKDGDEAGKPAPKTRIFLPTSFRMGAWLKHKFWFACAPPYLDFESSTESSINTRANNSIGMAEEEKQEPESKRSIILNEEANLNDVFVGSTVRRYILDIMVHLRTHRLTYNAKAGGVYTNSLDDVVLLSRLIGLHSGKMFVSPSHVKEASRWYFPMHLELVQRSSMDSSLLYGSDPNLVDEMLEKLAKIKCEEVNEFENPLFLESLVVKNVLSKVVPPV.

Belongs to the MTC2 family.

Its function is as follows. May be involved in telomere capping. In Saccharomyces cerevisiae (strain YJM789) (Baker's yeast), this protein is Maintenance of telomere capping protein 2 (MTC2).